We begin with the raw amino-acid sequence, 155 residues long: uncharacterized protein (155 aa).

Disordered stretches follow at residues 1–22 (MSSQ…TFTF) and 108–155 (PFNK…DTQA). S2 bears the N-acetylserine mark. S136, S144, and S146 each carry phosphoserine. Residues 136 to 155 (SDEDLDAESDSEGEDEDTQA) are compositionally biased toward acidic residues.

This is an uncharacterized protein from Rattus norvegicus (Rat).